Here is a 479-residue protein sequence, read N- to C-terminus: Adenylate kinase 8 (479 aa).

Adenylate kinase regions lie at residues 58–258 (PRIV…TYVQ) and 269–471 (PRVL…SGII). 67 to 72 (ASGKTT) is a binding site for ATP. The segment at 87–113 (TLENLILNEFSYTATEARRLYLQRKTV) is NMP 1. Residues 140 to 143 (GIPE), Gln147, and Arg203 each bind AMP. Residues 177-206 (GKRIDPQTGEIYHTTFDWPPESEIQNRLMV) are LID 1. 278–283 (GSGKSL) is an ATP binding site. The interval 298 to 327 (CCGQLLKEAVADRTTFGELIQPFFEKEMAV) is NMP 2. AMP contacts are provided by residues 325–327 (MAV), 354–357 (GVPR), and Gln361. The LID 2 stretch occupies residues 391-424 (LRRIDPVTGERYHLMYKPPPTMEIQARLLQNPKD). Arg392 provides a ligand contact to ATP.

The protein belongs to the adenylate kinase family. In terms of assembly, interacts with CFAP45 and CFAP52; CFAP45 and AK8 dimerization may create a cavity at the interface of the dimer that can accommodate AMP. Expressed in respiratory cells (at protein level).

The protein resides in the cytoplasm. The protein localises to the cytosol. It localises to the cytoskeleton. It is found in the cilium axoneme. It catalyses the reaction AMP + ATP = 2 ADP. The catalysed reaction is a 2'-deoxyribonucleoside 5'-diphosphate + ATP = a 2'-deoxyribonucleoside 5'-triphosphate + ADP. The enzyme catalyses a ribonucleoside 5'-diphosphate + ATP = a ribonucleoside 5'-triphosphate + ADP. Functionally, nucleoside monophosphate (NMP) kinase that catalyzes the reversible transfer of the terminal phosphate group between nucleoside triphosphates and monophosphates. Has highest activity toward AMP, and weaker activity toward dAMP, CMP and dCMP. Also displays broad nucleoside diphosphate kinase activity. This is Adenylate kinase 8 (AK8) from Homo sapiens (Human).